A 508-amino-acid chain; its full sequence is Chromosomal replication initiator protein DnaA (508 aa).

The domain I, interacts with DnaA modulators stretch occupies residues 1–91; sequence MADDPGSSFT…TDALSRRLGQ (91 aa). The interval 91–167 is domain II; it reads QQIQLGVRIA…AIDPAVAAGT (77 aa). The tract at residues 104–152 is disordered; sequence DDVEDALIPSAEPFPDTDADLSARRRTDSRASGERGAVTNTQPGWTNYF. Over residues 124-136 the composition is skewed to basic and acidic residues; sequence LSARRRTDSRASG. Residues 141–152 are compositionally biased toward polar residues; it reads VTNTQPGWTNYF. Residues 168–384 are domain III, AAA+ region; sequence SLNRRYTFDT…GALIRVTAFA (217 aa). Positions 212, 214, 215, and 216 each coordinate ATP. Positions 385–508 are domain IV, binds dsDNA; sequence SLNKTPIDKS…TTRIRQRSKR (124 aa).

The protein belongs to the DnaA family. Oligomerizes as a right-handed, spiral filament on DNA at oriC.

Its subcellular location is the cytoplasm. Functionally, plays an essential role in the initiation and regulation of chromosomal replication. ATP-DnaA binds to the origin of replication (oriC) to initiate formation of the DNA replication initiation complex once per cell cycle. Binds the DnaA box (a 9 base pair repeat at the origin) and separates the double-stranded (ds)DNA. Forms a right-handed helical filament on oriC DNA; dsDNA binds to the exterior of the filament while single-stranded (ss)DNA is stabiized in the filament's interior. The ATP-DnaA-oriC complex binds and stabilizes one strand of the AT-rich DNA unwinding element (DUE), permitting loading of DNA polymerase. After initiation quickly degrades to an ADP-DnaA complex that is not apt for DNA replication. Binds acidic phospholipids. This is Chromosomal replication initiator protein DnaA from Mycobacterium avium.